The sequence spans 400 residues: Multidrug resistance protein MdtH (400 aa).

The next 10 membrane-spanning stretches (helical) occupy residues 13–33 (YFLL…FPLI), 34–54 (SIRF…ALGL), 99–116 (PWIL…GTLF), 139–159 (LLLM…SWLL), 165–185 (LVCW…AWLL), 214–234 (VLTL…FPIV), 244–264 (AVKW…YPIA), 289–309 (FPVG…LFYL), 340–360 (LGLA…YDIG), and 365–385 (LPEL…YALH).

Belongs to the major facilitator superfamily. DHA1 family. MdtH (TC 2.A.1.2.21) subfamily.

Its subcellular location is the cell inner membrane. The polypeptide is Multidrug resistance protein MdtH (Proteus mirabilis (strain HI4320)).